Consider the following 214-residue polypeptide: Transmembrane emp24 domain-containing protein p24beta3 (214 aa).

Residues 1-27 (MERRQAKIHVFVLIGLILLNSINQISS) form the signal peptide. Over 28-178 (LSVTVNDEEC…RHTNESTRKR (151 aa)) the chain is Lumenal. Residues 35–122 (EECVQEYVLY…PETVSFYIHV (88 aa)) form the GOLD domain. Residues 140-158 (VNVKIAELREALESVVAEQ) are a coiled coil. An omega-N-methylated arginine mark is found at Arg164 and Arg169. N-linked (GlcNAc...) asparagine glycosylation occurs at Asn172. The helical transmembrane segment at 179 to 199 (VIFYTVGEYIFLAAASGLQVL) threads the bilayer. The Cytoplasmic portion of the chain corresponds to 200 to 214 (YIRKLFSKSVAYNRV). The short motif at 204–205 (LF) is the COPII vesicle coat-binding element. The COPI vesicle coat-binding signature appears at 204-214 (LFSKSVAYNRV). Residues 213 to 214 (RV) carry the Required for the export from the endoplasmic reticulum to the Golgi motif.

The protein belongs to the EMP24/GP25L family. In terms of assembly, probably oligomerizes with other members of the EMP24/GP25L family. Associates with the COPI vesicle coat (coatomer). Associates with the COPII vesicle coat (coatomer).

Its subcellular location is the golgi apparatus. It localises to the cis-Golgi network membrane. It is found in the golgi stack membrane. In terms of biological role, involved in vesicular protein trafficking. Mainly functions in the early secretory pathway but also in post-Golgi membranes. Thought to act as cargo receptor at the lumenal side for incorporation of secretory cargo molecules into transport vesicles and to be involved in vesicle coat formation at the cytoplasmic side. This Arabidopsis thaliana (Mouse-ear cress) protein is Transmembrane emp24 domain-containing protein p24beta3.